We begin with the raw amino-acid sequence, 196 residues long: MKIIIINTNCSNLSSVKIMLNKLGCNTIITDDPDLIIQSDKILLPGVGTANTAMKQLKKKNLIQLIKKCTQPTLGICLGMQLFGSFSNENTHTNTLNIINVPVKHMYSPTLPIPHMGWNNITILKKHDLLNGINNNHYFYFAHSYCMELNYTTIAYTNYGQPFSSVIVYKNFFGVQFHPEKSSFSGEQLIKNFLEI.

The 195-residue stretch at K2 to I196 folds into the Glutamine amidotransferase type-1 domain. The active-site Nucleophile is C77. Catalysis depends on residues H178 and E180.

Heterodimer of HisH and HisF.

Its subcellular location is the cytoplasm. It carries out the reaction 5-[(5-phospho-1-deoxy-D-ribulos-1-ylimino)methylamino]-1-(5-phospho-beta-D-ribosyl)imidazole-4-carboxamide + L-glutamine = D-erythro-1-(imidazol-4-yl)glycerol 3-phosphate + 5-amino-1-(5-phospho-beta-D-ribosyl)imidazole-4-carboxamide + L-glutamate + H(+). The enzyme catalyses L-glutamine + H2O = L-glutamate + NH4(+). Its pathway is amino-acid biosynthesis; L-histidine biosynthesis; L-histidine from 5-phospho-alpha-D-ribose 1-diphosphate: step 5/9. IGPS catalyzes the conversion of PRFAR and glutamine to IGP, AICAR and glutamate. The HisH subunit catalyzes the hydrolysis of glutamine to glutamate and ammonia as part of the synthesis of IGP and AICAR. The resulting ammonia molecule is channeled to the active site of HisF. The sequence is that of Imidazole glycerol phosphate synthase subunit HisH from Blochmanniella floridana.